Reading from the N-terminus, the 224-residue chain is BOS complex subunit TMEM147 (224 aa).

The helical transmembrane segment at 1–21 (MTLFHFGNCFALAYFPYFITY) threads the bilayer. The Cytoplasmic portion of the chain corresponds to 22–34 (KCSGLSEYNAFWK). The chain crosses the membrane as a helical span at residues 35 to 58 (CVQAGVTYLFVQLCKMLFLATFFP). Over 59–66 (TWEGGIYD) the chain is Lumenal. The chain crosses the membrane as a helical span at residues 67–88 (FIGEFMKASVDVADLIGLNLVM). Topologically, residues 89-98 (SRNAGKGEYK) are cytoplasmic. Residues 99 to 124 (IMVAALGWATAELIMSRCIPLWVGAR) form a helical membrane-spanning segment. Topologically, residues 125–129 (GIEFD) are lumenal. Residues 130-155 (WKYIQMSIDSNISLVHYIVASAQVWM) form a helical membrane-spanning segment. The Cytoplasmic segment spans residues 156–164 (ITRYDLYHT). Residues 165 to 187 (FRPAVLLLMFLSVYKAFVMETFV) form a helical membrane-spanning segment. Residues 188–194 (HLCSLGS) lie on the Lumenal side of the membrane. Residues 195 to 216 (WTALLARAVVTGLLALSTLALY) form a helical membrane-spanning segment. Topologically, residues 217–224 (VAVVNVHS) are cytoplasmic.

The protein belongs to the TMEM147 family. As to quaternary structure, component of the back of Sec61 (BOS) complex, composed of NCLN/Nicalin, NOMO1 and TMEM147. The BOS complex is part of the multi-pass translocon (MPT) complex, composed of three subcomplexes, the GEL complex (composed of RAB5IF/OPTI and TMCO1), the BOS complex (composed of NCLN/Nicalin, NOMO1 and TMEM147) and the PAT complex (composed of WDR83OS/Asterix and CCDC47). The MPT complex associates with the SEC61 complex. Interacts with CHRM3, CHRM1 and AVPR2. Interacts with LBR; promoting LBR localization to the nucleus inner membrane. Interacts with DHCR7.

The protein localises to the endoplasmic reticulum membrane. Its subcellular location is the nucleus membrane. It localises to the cell membrane. Functionally, component of the multi-pass translocon (MPT) complex that mediates insertion of multi-pass membrane proteins into the lipid bilayer of membranes. The MPT complex takes over after the SEC61 complex: following membrane insertion of the first few transmembrane segments of proteins by the SEC61 complex, the MPT complex occludes the lateral gate of the SEC61 complex to promote insertion of subsequent transmembrane regions. Also acts as a negative regulator of CHRM3 function, most likely by interfering with its trafficking to the cell membrane. Negatively regulates CHRM3-mediated calcium mobilization and activation of RPS6KA1/p90RSK activity. Regulates LBR localization to the nucleus inner membrane. This is BOS complex subunit TMEM147 from Canis lupus familiaris (Dog).